The chain runs to 305 residues: Oxidoreductase swnR (305 aa).

It belongs to the NmrA-type oxidoreductase family. Isoflavone reductase subfamily.

The enzyme catalyses L-pipecolate + O2 = L-1-piperideine-6-carboxylate + H2O2 + H(+). It functions in the pathway mycotoxin biosynthesis. Functionally, oxidoreductase; part of the gene cluster that mediates the biosynthesis of swainsonine (SW), a cytotoxic fungal alkaloid and a potential cancer therapy drug. Swainsonine production occurs via a multibranched pathway and is dispensable for fungal colonization of plants and infection of insect hosts. The first step of swainsonine biosynthesis is the production of the precursor pipecolic acid (PA) via conversion of L-lysine (Lys) to 1-piperideine-6-carboxylate (P6C) by the aminotransferase swnA, the latter being further reduced to PA by the reductase swnR. The PKS-NRPS hybrid synthetase swnK uptakes and condensates PA and malonyl-CoA with and without skipping of the ketoreductase (KR) domain in order to produce 3 intermediates, 1-oxoindolizidine, (1S)-1-hydroxyindolizin, and (1R)-1-hydroxyindolizine; with the transisomer (1S)-1-hydroxyindolizin being predominant. The terminal thioester reductase (TE) domain of swnK is involved in reduction of the thioester bond to release the intermediate aldehydes. The oxidoreductase swnN could contribute to the reduction of 1-oxoindolizidine to (1S)-1-hydroxyindolizin and (1R)-1-hydroxyindolizine, contributing to the major route of SW production. The dioxygenase swnH2 would be responsible for the oxidization of (1R)-1-hydroxyindolizine into (1R,2S)-1,2-dihydroxyindolizine and of (1S)-1-hydroxyindolizin to yield both (1R,2S)-1,2-dihydroxyindolizine and (1S,2S)-1,2-dihydroxyindolizine. The dioxygenase swnH1 then performs the conversion of the 1,2-dihydroxyindolizine epimers to SW. The sequence is that of Oxidoreductase swnR from Arthroderma benhamiae (strain ATCC MYA-4681 / CBS 112371) (Trichophyton mentagrophytes).